We begin with the raw amino-acid sequence, 229 residues long: Protein-L-isoaspartate O-methyltransferase (229 aa).

Ser-74 is a catalytic residue.

Belongs to the methyltransferase superfamily. L-isoaspartyl/D-aspartyl protein methyltransferase family.

Its subcellular location is the cytoplasm. It carries out the reaction [protein]-L-isoaspartate + S-adenosyl-L-methionine = [protein]-L-isoaspartate alpha-methyl ester + S-adenosyl-L-homocysteine. Functionally, catalyzes the methyl esterification of L-isoaspartyl residues in peptides and proteins that result from spontaneous decomposition of normal L-aspartyl and L-asparaginyl residues. It plays a role in the repair and/or degradation of damaged proteins. The polypeptide is Protein-L-isoaspartate O-methyltransferase (Pelotomaculum thermopropionicum (strain DSM 13744 / JCM 10971 / SI)).